Reading from the N-terminus, the 624-residue chain is Adhesion and hyphal regulator 1 (624 aa).

A DNA-binding region (zn(2)-C6 fungal-type) is located at residues 19–46 (CVTCRDRHIKCDEQQPVCKNCQKSNRKC). Disordered regions lie at residues 63–84 (DDNK…YAFP) and 230–250 (PQHH…TDPN). Polar residues predominate over residues 237 to 250 (DTSQHQETTSTDPN).

Interacts with MCM1.

Its subcellular location is the nucleus. Functionally, transcription factor that binds the promoters of genes involved in biofilm formation, which include several key adhesion genes, and recruits MCM1 to these sites. Plays an important role in hyphal growth and virulence. Promotes conversion of opaque cells to white phase, but needs existence of EFG1, a key regulator required for maintenance of the white state. This chain is Adhesion and hyphal regulator 1 (AHR1), found in Candida albicans (strain SC5314 / ATCC MYA-2876) (Yeast).